The chain runs to 240 residues: Mannose-binding protein C (240 aa).

An N-terminal signal peptide occupies residues 1-18; it reads MSLFPSLHLLLLIVMTAS. 2 consecutive Collagen-like domains span residues 39 to 61 and 67 to 97; these read SPGI…KGEP and GLQG…GDSG. Position 46 is a hydroxyproline (Pro46). The segment at 48-102 is disordered; that stretch reads KDGLDGAKGEKGEPGQGLIGLQGLPGMVGPQGSPGIPGLPGLKGQKGDSGIDPGN. Residues 49 to 60 are compositionally biased toward basic and acidic residues; that stretch reads DGLDGAKGEKGE. Residues Pro72, Pro81, and Pro87 each carry the hydroxyproline modification. A coiled-coil region spans residues 104 to 122; it reads LANLRSELDNIKKWLIFAQ. One can recognise a C-type lectin domain in the interval 126–237; the sequence is VGKKLYLTNG…CSSQLSAVCE (112 aa). 2 disulfides stabilise this stretch: Cys147–Cys236 and Cys214–Cys228.

Interacts with MASP1 and MASP2. Interacts with MEP1A and MEP1B and may inhibit their catalytic activity. Forms oligomeric complexes of 2 or 3 homotrimers. Expressed in liver. Weakly expressed in kidney and testis.

Its subcellular location is the secreted. Calcium-dependent lectin involved in innate immune defense. Binds mannose, fucose and N-acetylglucosamine on different microorganisms and activates the lectin complement pathway. Binds to late apoptotic cells, as well as to apoptotic blebs and to necrotic cells, but not to early apoptotic cells, facilitating their uptake by macrophages. According to some authors, it only binds mannose. In Sus scrofa (Pig), this protein is Mannose-binding protein C.